We begin with the raw amino-acid sequence, 107 residues long: UPF0145 protein Ent638_1382 (107 aa).

It belongs to the UPF0145 family.

The chain is UPF0145 protein Ent638_1382 from Enterobacter sp. (strain 638).